Here is a 440-residue protein sequence, read N- to C-terminus: Xylose isomerase (440 aa).

Catalysis depends on residues His-101 and Asp-104. Mg(2+)-binding residues include Glu-232, Glu-268, His-271, Asp-296, Asp-307, Asp-309, and Asp-339.

Belongs to the xylose isomerase family. Homotetramer. Mg(2+) serves as cofactor.

It is found in the cytoplasm. It catalyses the reaction alpha-D-xylose = alpha-D-xylulofuranose. The protein is Xylose isomerase of Salmonella typhi.